Consider the following 452-residue polypeptide: Bifunctional protein GlmU (452 aa).

The segment at methionine 1–lysine 224 is pyrophosphorylase. UDP-N-acetyl-alpha-D-glucosamine is bound by residues leucine 6–glycine 9, lysine 20, glutamine 71, glycine 76–threonine 77, tyrosine 98–aspartate 100, glycine 135, glutamate 149, asparagine 164, and asparagine 222. Aspartate 100 is a Mg(2+) binding site. Asparagine 222 is a Mg(2+) binding site. The tract at residues valine 225 to histidine 245 is linker. The interval glycine 246–lysine 452 is N-acetyltransferase. UDP-N-acetyl-alpha-D-glucosamine contacts are provided by arginine 328 and lysine 346. The active-site Proton acceptor is histidine 358. UDP-N-acetyl-alpha-D-glucosamine is bound by residues tyrosine 361 and asparagine 372. Acetyl-CoA-binding positions include alanine 375, asparagine 381 to tyrosine 382, serine 400, alanine 418, and arginine 435.

This sequence in the N-terminal section; belongs to the N-acetylglucosamine-1-phosphate uridyltransferase family. The protein in the C-terminal section; belongs to the transferase hexapeptide repeat family. As to quaternary structure, homotrimer. The cofactor is Mg(2+).

Its subcellular location is the cytoplasm. The catalysed reaction is alpha-D-glucosamine 1-phosphate + acetyl-CoA = N-acetyl-alpha-D-glucosamine 1-phosphate + CoA + H(+). The enzyme catalyses N-acetyl-alpha-D-glucosamine 1-phosphate + UTP + H(+) = UDP-N-acetyl-alpha-D-glucosamine + diphosphate. Its pathway is nucleotide-sugar biosynthesis; UDP-N-acetyl-alpha-D-glucosamine biosynthesis; N-acetyl-alpha-D-glucosamine 1-phosphate from alpha-D-glucosamine 6-phosphate (route II): step 2/2. It functions in the pathway nucleotide-sugar biosynthesis; UDP-N-acetyl-alpha-D-glucosamine biosynthesis; UDP-N-acetyl-alpha-D-glucosamine from N-acetyl-alpha-D-glucosamine 1-phosphate: step 1/1. It participates in bacterial outer membrane biogenesis; LPS lipid A biosynthesis. Its function is as follows. Catalyzes the last two sequential reactions in the de novo biosynthetic pathway for UDP-N-acetylglucosamine (UDP-GlcNAc). The C-terminal domain catalyzes the transfer of acetyl group from acetyl coenzyme A to glucosamine-1-phosphate (GlcN-1-P) to produce N-acetylglucosamine-1-phosphate (GlcNAc-1-P), which is converted into UDP-GlcNAc by the transfer of uridine 5-monophosphate (from uridine 5-triphosphate), a reaction catalyzed by the N-terminal domain. The chain is Bifunctional protein GlmU from Herminiimonas arsenicoxydans.